We begin with the raw amino-acid sequence, 264 residues long: Probable metallo-hydrolase YflN (264 aa).

His-80, His-82, Asp-84, His-85, His-169, Asp-188, and His-241 together coordinate Zn(2+).

The protein belongs to the metallo-beta-lactamase superfamily. Zn(2+) serves as cofactor.

The protein is Probable metallo-hydrolase YflN (yflN) of Bacillus subtilis (strain 168).